The chain runs to 276 residues: Large ribosomal subunit protein uL2 (276 aa).

2 disordered regions span residues methionine 1–aspartate 20 and threonine 219–lysine 276. A compositionally biased stretch (polar residues) spans asparagine 7–aspartate 20.

It belongs to the universal ribosomal protein uL2 family. As to quaternary structure, part of the 50S ribosomal subunit. Forms a bridge to the 30S subunit in the 70S ribosome.

In terms of biological role, one of the primary rRNA binding proteins. Required for association of the 30S and 50S subunits to form the 70S ribosome, for tRNA binding and peptide bond formation. It has been suggested to have peptidyltransferase activity; this is somewhat controversial. Makes several contacts with the 16S rRNA in the 70S ribosome. This Bacillus cereus (strain Q1) protein is Large ribosomal subunit protein uL2.